Reading from the N-terminus, the 96-residue chain is uncharacterized protein (96 aa).

3 consecutive transmembrane segments (helical) span residues 3–23, 30–50, and 68–88; these read KLTI…QLFA, TLGN…LASI, and IGLL…IIII.

It localises to the cell membrane. This is an uncharacterized protein from Bacillus subtilis (strain 168).